Consider the following 51-residue polypeptide: Light-harvesting protein B800/850/890 beta-2 chain (51 aa).

Residues 1 to 17 lie on the Cytoplasmic side of the membrane; the sequence is ADEMRNVSDEEAKEFHA. A bacteriochlorophyll is bound by residues His16 and His34. A helical transmembrane segment spans residues 18 to 40; it reads MFSQAFTVYVGVAVVAHILAWAW. The Periplasmic portion of the chain corresponds to 41-51; it reads RPWIPGDEGFG.

This sequence belongs to the antenna complex beta subunit family. In terms of assembly, the core complex is formed by different alpha and beta chains, binding bacteriochlorophyll molecules, and arranged most probably in tetrameric structures disposed around the reaction center. The non-pigmented gamma chains may constitute additional components.

It localises to the cell inner membrane. Antenna complexes are light-harvesting systems, which transfer the excitation energy to the reaction centers. The polypeptide is Light-harvesting protein B800/850/890 beta-2 chain (Halorhodospira halophila (strain DSM 244 / SL1) (Ectothiorhodospira halophila (strain DSM 244 / SL1))).